A 454-amino-acid chain; its full sequence is Ribosomal protein uS12 methylthiotransferase RimO (454 aa).

Positions 9–124 (PKIGFVSLGC…VMDAVHLHMP (116 aa)) constitute an MTTase N-terminal domain. Residues cysteine 18, cysteine 54, cysteine 83, cysteine 155, cysteine 159, and cysteine 162 each contribute to the [4Fe-4S] cluster site. In terms of domain architecture, Radical SAM core spans 141-382 (LTPKHFAYLK…MLLQEEISKK (242 aa)). The region spanning 385 to 454 (QAKVGKTMRV…ADAHDLWAEA (70 aa)) is the TRAM domain.

Belongs to the methylthiotransferase family. RimO subfamily. [4Fe-4S] cluster serves as cofactor.

The protein resides in the cytoplasm. It carries out the reaction L-aspartate(89)-[ribosomal protein uS12]-hydrogen + (sulfur carrier)-SH + AH2 + 2 S-adenosyl-L-methionine = 3-methylsulfanyl-L-aspartate(89)-[ribosomal protein uS12]-hydrogen + (sulfur carrier)-H + 5'-deoxyadenosine + L-methionine + A + S-adenosyl-L-homocysteine + 2 H(+). Catalyzes the methylthiolation of an aspartic acid residue of ribosomal protein uS12. The sequence is that of Ribosomal protein uS12 methylthiotransferase RimO from Herminiimonas arsenicoxydans.